A 150-amino-acid polypeptide reads, in one-letter code: Macrodomain Ter protein (150 aa).

This sequence belongs to the MatP family. Homodimer.

It localises to the cytoplasm. In terms of biological role, required for spatial organization of the terminus region of the chromosome (Ter macrodomain) during the cell cycle. Prevents early segregation of duplicated Ter macrodomains during cell division. Binds specifically to matS, which is a 13 bp signature motif repeated within the Ter macrodomain. This chain is Macrodomain Ter protein, found in Citrobacter koseri (strain ATCC BAA-895 / CDC 4225-83 / SGSC4696).